The chain runs to 257 residues: Protein TONNEAU 1b (257 aa).

The LisH domain maps to 73–105; it reads SGRLLSALICEYLDWAQLNHTLKVYQPECNSAK. 2 disordered regions span residues 148 to 216 and 231 to 257; these read QVMG…EDMP and LDRK…EGKD. Residues 187 to 199 are compositionally biased toward low complexity; it reads SVSASQASGAATS. Composition is skewed to basic and acidic residues over residues 201–212 and 244–257; these read YRKDESNWRYDT and NVKD…EGKD.

In terms of assembly, interacts with CEN1, LNG1/TRM2 and LNG2/TRM1 (via C-terminus).

The protein resides in the cytoplasm. It is found in the cytoskeleton. Functionally, involved in the control of the dynamic organization of the cortical cytoskeleton. May play a role in the organization of microtubule arrays at the centrosome through interaction with centrin 1 (CEN1). The sequence is that of Protein TONNEAU 1b (TON1B) from Arabidopsis thaliana (Mouse-ear cress).